A 347-amino-acid polypeptide reads, in one-letter code: Globoside alpha-1,3-N-acetylgalactosaminyltransferase 1 (347 aa).

Residues 1–5 (MHRRR) are Cytoplasmic-facing. Residues 6 to 26 (LALGLGFCLLAGTSLSVLWVY) traverse the membrane as a helical; Signal-anchor for type II membrane protein segment. The Lumenal segment spans residues 27–347 (LENWLPVSYV…LDKDISCLRS (321 aa)). The N-linked (GlcNAc...) asparagine glycan is linked to Asn108. Substrate-binding positions include 116–121 (FAVGKY), 206–208 (DVD), and 228–231 (HPSY). Asp206 and Asp208 together coordinate Mn(2+). Glu298 functions as the Nucleophile in the catalytic mechanism.

It belongs to the glycosyltransferase 6 family. Mn(2+) serves as cofactor. Widely expressed. Expressed at higher level in placenta, ovary and peripheral blood leukocyte, whereas it is weakly expressed in liver, thymus, and testis. Expressed in bone marrow erythroid cells.

It localises to the golgi apparatus membrane. It participates in protein modification; protein glycosylation. Its function is as follows. Has lost the ability to synthesize Forssman glycolipid antigen (FORS1/FG). Might have acquired an alternative function in glycosphingolipid metabolism, but it remains to be established. It appears to have drifted more slowly than confirmed pseudogenes in the glycosyltransferase 6 family, suggesting that it has remained under evolutionary pressure. The chain is Globoside alpha-1,3-N-acetylgalactosaminyltransferase 1 from Homo sapiens (Human).